A 625-amino-acid chain; its full sequence is 1-deoxy-D-xylulose-5-phosphate synthase (625 aa).

Thiamine diphosphate is bound by residues His80 and 121-123 (GHS). Position 152 (Asp152) interacts with Mg(2+). Residues 153 to 154 (GS), Asn181, Tyr290, and Glu371 each bind thiamine diphosphate. Asn181 lines the Mg(2+) pocket.

This sequence belongs to the transketolase family. DXPS subfamily. Homodimer. The cofactor is Mg(2+). It depends on thiamine diphosphate as a cofactor.

The catalysed reaction is D-glyceraldehyde 3-phosphate + pyruvate + H(+) = 1-deoxy-D-xylulose 5-phosphate + CO2. It functions in the pathway metabolic intermediate biosynthesis; 1-deoxy-D-xylulose 5-phosphate biosynthesis; 1-deoxy-D-xylulose 5-phosphate from D-glyceraldehyde 3-phosphate and pyruvate: step 1/1. Catalyzes the acyloin condensation reaction between C atoms 2 and 3 of pyruvate and glyceraldehyde 3-phosphate to yield 1-deoxy-D-xylulose-5-phosphate (DXP). This chain is 1-deoxy-D-xylulose-5-phosphate synthase, found in Haemophilus influenzae (strain PittGG).